Consider the following 328-residue polypeptide: Eukaryotic translation initiation factor 3 subunit I (328 aa).

WD repeat units lie at residues 8 to 49 (GHER…GTYE), 50 to 89 (GHTG…QLYK), 145 to 184 (TRES…FVES), 189 to 228 (NSGS…VIKT), and 286 to 327 (GHFG…FKYT).

This sequence belongs to the eIF-3 subunit I family. As to quaternary structure, component of the eukaryotic translation initiation factor 3 (eIF-3) complex. The eIF-3 complex appears to include tif32/eif3a, SPAC25G10.08/eif3b, tif33/eif3c, SPBC4C3.07/eif3f, tif35/eif3g and sum1/eif3i. This set of common subunits may also associate exclusively with either moe1/eif3d and int6/eif3e, or with SPAC821.05/eif3h and SPAC1751.03/eif3m. The eIF-3 complex may also include SPAC3A12.13c/eif3j.

The protein localises to the cytoplasm. It localises to the nucleus. Component of the eukaryotic translation initiation factor 3 (eIF-3) complex, which is involved in protein synthesis of a specialized repertoire of mRNAs and, together with other initiation factors, stimulates binding of mRNA and methionyl-tRNAi to the 40S ribosome. The eIF-3 complex specifically targets and initiates translation of a subset of mRNAs involved in cell proliferation. The chain is Eukaryotic translation initiation factor 3 subunit I (sum1) from Schizosaccharomyces pombe (strain 972 / ATCC 24843) (Fission yeast).